The primary structure comprises 216 residues: Imidazole glycerol phosphate synthase subunit HisH (216 aa).

The Glutamine amidotransferase type-1 domain occupies 2–216; sequence SIAIIDYGSG…LISNFLRWKP (215 aa). The active-site Nucleophile is Cys88. Catalysis depends on residues His196 and Glu198.

In terms of assembly, heterodimer of HisH and HisF.

Its subcellular location is the cytoplasm. The catalysed reaction is 5-[(5-phospho-1-deoxy-D-ribulos-1-ylimino)methylamino]-1-(5-phospho-beta-D-ribosyl)imidazole-4-carboxamide + L-glutamine = D-erythro-1-(imidazol-4-yl)glycerol 3-phosphate + 5-amino-1-(5-phospho-beta-D-ribosyl)imidazole-4-carboxamide + L-glutamate + H(+). It catalyses the reaction L-glutamine + H2O = L-glutamate + NH4(+). It functions in the pathway amino-acid biosynthesis; L-histidine biosynthesis; L-histidine from 5-phospho-alpha-D-ribose 1-diphosphate: step 5/9. Functionally, IGPS catalyzes the conversion of PRFAR and glutamine to IGP, AICAR and glutamate. The HisH subunit catalyzes the hydrolysis of glutamine to glutamate and ammonia as part of the synthesis of IGP and AICAR. The resulting ammonia molecule is channeled to the active site of HisF. The protein is Imidazole glycerol phosphate synthase subunit HisH of Bradyrhizobium diazoefficiens (strain JCM 10833 / BCRC 13528 / IAM 13628 / NBRC 14792 / USDA 110).